The primary structure comprises 1035 residues: Retinoblastoma-related protein (1035 aa).

The segment at 403–426 is disordered; that stretch reads ITSPLSPHRSPASHANGIPGSANS. The tract at residues 431–632 is domain A; the sequence is TPVSTAMTTA…EKGSSLYNSL (202 aa). The interval 431–885 is pocket; that stretch reads TPVSTAMTTA…NEIFIPAAKP (455 aa). Residues 633 to 753 are spacer; the sequence is TVARPALSAE…PGGGGETCAE (121 aa). Disordered stretches follow at residues 674-697 and 721-748; these read PSLQ…PKRP and GNLK…GGGG. The interval 754 to 885 is domain B; it reads TGINVFFTKI…NEIFIPAAKP (132 aa).

The protein belongs to the retinoblastoma protein (RB) family.

The protein localises to the nucleus. Its function is as follows. Regulator of biological processes that recruits a histone deacetylase to control gene transcription. May play a role in the entry into mitosis, negatively regulating the cell proliferation. Formation of stable complexes with geminiviridae replication-associated proteins may create a cellular environment which favors viral DNA replication. The polypeptide is Retinoblastoma-related protein (RBL901) (Populus trichocarpa (Western balsam poplar)).